The following is a 96-amino-acid chain: DNA/RNA-binding protein Alba (96 aa).

The protein belongs to the histone-like Alba family.

It localises to the cytoplasm. The protein resides in the chromosome. Its function is as follows. Binds double-stranded DNA tightly but without sequence specificity. Involved in DNA compaction. This chain is DNA/RNA-binding protein Alba, found in Methanocella arvoryzae (strain DSM 22066 / NBRC 105507 / MRE50).